The following is a 129-amino-acid chain: Glycine cleavage system H protein (129 aa).

The 83-residue stretch at 24–106 (IAVIGISAYA…YEQGWLLKVQ (83 aa)) folds into the Lipoyl-binding domain. Lys65 bears the N6-lipoyllysine mark.

It belongs to the GcvH family. In terms of assembly, the glycine cleavage system is composed of four proteins: P, T, L and H. It depends on (R)-lipoate as a cofactor.

In terms of biological role, the glycine cleavage system catalyzes the degradation of glycine. The H protein shuttles the methylamine group of glycine from the P protein to the T protein. This is Glycine cleavage system H protein from Synechococcus elongatus (strain ATCC 33912 / PCC 7942 / FACHB-805) (Anacystis nidulans R2).